The primary structure comprises 484 residues: Tyramine receptor 1 (484 aa).

At 1–54 (MVRVELQAASLMNGSSAAEEPQDALVGGDACGGRRPPSVLGVRLAVPEWEVAVT) the chain is on the extracellular side. Residue Asn-13 is glycosylated (N-linked (GlcNAc...) asparagine). The chain crosses the membrane as a helical span at residues 55–77 (AVSLSLIILITIVGNVLVVLSVF). At 78-87 (TYKPLRIVQN) the chain is on the cytoplasmic side. A helical transmembrane segment spans residues 88–109 (FFIVSLAVADLTVAVLVMPFNV). Residues 110-126 (AYSLIQRWVFGIVVCKM) are Extracellular-facing. Cys-124 and Cys-203 form a disulfide bridge. The helical transmembrane segment at 127-147 (WLTCDVLCCTASILNLCAIAL) threads the bilayer. Residues 148–167 (DRYWAITDPINYAQKRTLRR) are Cytoplasmic-facing. A helical membrane pass occupies residues 168-190 (VLAMIAGVWLLSGVISSPPLIGW). Topologically, residues 191–215 (NDWPMEFNDTTPCQLTEEQGYVIYS) are extracellular. A glycan (N-linked (GlcNAc...) asparagine) is linked at Asn-198. The chain crosses the membrane as a helical span at residues 216–237 (SLGSFFIPLFIMTIVYVEIFIA). The Cytoplasmic segment spans residues 238-411 (TKRRLRERAK…LSKERRAART (174 aa)). The segment covering 253–280 (SAMKQQMAAQAVPSSVPSHDQESVSSET) has biased composition (polar residues). Disordered stretches follow at residues 253–322 (SAMK…PAMV) and 358–383 (TTTA…PTPV). Positions 295 to 306 (EKRRKTKKKSKK) are enriched in basic residues. Residues 361-378 (AVTDSPRSRTASQKGSTA) are compositionally biased toward polar residues. A helical membrane pass occupies residues 412-433 (LGIIMGVFVVCWLPFFLMYVIV). Residues 434–448 (PFCNPSCKPSPKLVN) lie on the Extracellular side of the membrane. A helical membrane pass occupies residues 449–470 (FITWLGYINSALNPIIYTIFNL). The Cytoplasmic portion of the chain corresponds to 471 to 484 (DFRRAFKKLLHFKT).

The protein belongs to the G-protein coupled receptor 1 family. In terms of tissue distribution, present mainly in the central nervous system, especially in the supra- and subesophageal, thoracic and abdominal ganglia. Not found in the distal part of optic lobes.

It is found in the cell membrane. Functionally, G-protein coupled receptor for tyramine, a known neurotransmitter and neuromodulator and direct precursor of octopamine. The rank order of potency for agonists of this receptor is tyramine &gt; naphazoline &gt; tolazoline &gt; DL-octopamine &gt; dopamine &gt; epinephrine &gt; 5-hydroxytryptamine. For antagonists, the rank order is yohimbine &gt; chlorpromazine &gt; mianserin &gt; phentolamine &gt; metoclopramide. The sequence is that of Tyramine receptor 1 (GCR1) from Locusta migratoria (Migratory locust).